A 523-amino-acid polypeptide reads, in one-letter code: Heparanase (523 aa).

An N-terminal signal peptide occupies residues 1–18; the sequence is MLVLLLLVLLLAVPPRRT. Residues 42–44, threonine 77, and 137–141 contribute to the heparan sulfate group site; these read DAS and KKHKN. Asparagine 141 and asparagine 196 each carry an N-linked (GlcNAc...) asparagine glycan. Catalysis depends on glutamate 204, which acts as the Proton donor. Heparan sulfate group is bound by residues 250 to 260, histidine 276, and arginine 283; that span reads QPRKHTQHLLR. The tract at residues 268 to 397 is required for heterodimerization with the heparanase 8 kDa subunit; it reads KAIDSVTWHH…LLYKRLVGTR (130 aa). Glutamate 323 acts as the Nucleophile in catalysis. Residues 328–330 and 369–371 each bind heparan sulfate group; these read YGG and GSY. Cysteine 417 and cysteine 522 are oxidised to a cystine. N-linked (GlcNAc...) asparagine glycosylation is found at asparagine 436 and asparagine 439. The interval 507–523 is required for transferring proheparanase to the Golgi apparatus, secretion and subsequent enzyme activity and for enhancement of PKB/AKT1 phosphorylation; sequence FSYGFYVIRNAKAIACI.

This sequence belongs to the glycosyl hydrolase 79 family. As to quaternary structure, heterodimer; the active enzyme is a heterodimer of the 60 kDa and 45 kDa proteolytic products. Post-translationally, N-glycosylated. In terms of processing, proteolytically cleaved to produce a 60 kDa and a 45 kDa product.

Its subcellular location is the secreted. It carries out the reaction endohydrolysis of (1-&gt;4)-beta-D-glycosidic bonds of heparan sulfate chains in heparan sulfate proteoglycan.. Its function is as follows. Endoglycosidase that cleaves heparan sulfate proteoglycans (HSPGs) into heparan sulfate side chains and core proteoglycans. Participates in extracellular matrix (ECM) degradation and remodeling. Selectively cleaves the linkage between a glucuronic acid unit and an N-sulfo glucosamine unit carrying either a 3-O-sulfo or a 6-O-sulfo group. Can also cleave the linkage between a glucuronic acid unit and an N-sulfo glucosamine unit carrying a 2-O-sulfo group, but not linkages between a glucuronic acid unit and a 2-O-sulfated iduronic acid moiety. Increases cell adhesion to the extracellular matrix (ECM), independent of its enzymatic activity. The protein is Heparanase (HPSE) of Gallus gallus (Chicken).